A 759-amino-acid polypeptide reads, in one-letter code: Protein transport protein sec23-1 (759 aa).

4 residues coordinate Zn(2+): Cys56, Cys60, Cys79, and Cys82.

The protein belongs to the SEC23/SEC24 family. SEC23 subfamily. The COPII coat is composed of at least 5 proteins: the sec23/24 complex, the sec13/31 complex, and the protein sar1.

It is found in the cytoplasm. The protein resides in the cytoplasmic vesicle. The protein localises to the COPII-coated vesicle membrane. Its subcellular location is the endoplasmic reticulum membrane. It localises to the golgi apparatus membrane. Component of the coat protein complex II (COPII) which promotes the formation of transport vesicles from the endoplasmic reticulum (ER). The coat has two main functions, the physical deformation of the endoplasmic reticulum membrane into vesicles and the selection of cargo molecules. In Schizosaccharomyces pombe (strain 972 / ATCC 24843) (Fission yeast), this protein is Protein transport protein sec23-1 (sec231).